Reading from the N-terminus, the 513-residue chain is Xylose import ATP-binding protein XylG (513 aa).

ABC transporter domains lie at 5–242 and 259–505; these read LEMK…VGRE and LRIE…LRSE. Residue 37-44 coordinates ATP; the sequence is GENGSGKS.

It belongs to the ABC transporter superfamily. Xylose importer (TC 3.A.1.2.4) family. In terms of assembly, the complex is composed of two ATP-binding proteins (XylG), two transmembrane proteins (XylH) and a solute-binding protein (XylF).

It is found in the cell inner membrane. It catalyses the reaction D-xylose(out) + ATP + H2O = D-xylose(in) + ADP + phosphate + H(+). Part of the ABC transporter complex XylFGH involved in xylose import. Responsible for energy coupling to the transport system. The protein is Xylose import ATP-binding protein XylG of Escherichia coli O6:K15:H31 (strain 536 / UPEC).